Here is a 382-residue protein sequence, read N- to C-terminus: Na(+)/H(+) antiporter NhaA 1 (382 aa).

A run of 11 helical transmembrane segments spans residues 10 to 30 (EFSIPLISGVIVALVWANISP), 45 to 65 (FSFHFIVNDFFMVLFFGIAAA), 87 to 107 (LLATIGGVVGPVLVYVVLNAL), 116 to 136 (GWGIPTATDIALAWLVASLVF), 145 to 165 (FLLLLAIADDAIGLAIIALFY), 170 to 190 (LPAAPQWLVLVLSGMGAAALL), 211 to 231 (AGLFMAHLHPALALVFIVPFL), 252 to 272 (LASFEHEWKVMVDFGLFLFGL), 275 to 295 (AGVTFGSIGAATWLVLASLVI), 326 to 346 (LVGLIAGIGLTVALFVAGEAF), and 353 to 373 (GAAKMGALMSAGCAVLALAAG).

It belongs to the NhaA Na(+)/H(+) (TC 2.A.33) antiporter family.

It localises to the cell inner membrane. It carries out the reaction Na(+)(in) + 2 H(+)(out) = Na(+)(out) + 2 H(+)(in). Its function is as follows. Na(+)/H(+) antiporter that extrudes sodium in exchange for external protons. The polypeptide is Na(+)/H(+) antiporter NhaA 1 (Pelobacter propionicus (strain DSM 2379 / NBRC 103807 / OttBd1)).